A 151-amino-acid chain; its full sequence is Small ribosomal subunit protein uS15 (151 aa).

The protein belongs to the universal ribosomal protein uS15 family.

In Wuchereria bancrofti, this protein is Small ribosomal subunit protein uS15 (RPS13).